The following is a 64-amino-acid chain: Endodeoxyribonuclease toxin RalR (64 aa).

Ca(2+) is required as a cofactor. The cofactor is Mg(2+).

With respect to regulation, inhibited by EDTA. In terms of biological role, toxic component of a type I toxin-antitoxin (TA) system. Upon overexpression inhibits growth and reduces colony-forming units in both the presence and absence of the Rac prophage, cells become filamentous. Has deoxyribonuclease activity (probably endonucleolytic), does not digest RNA. Its toxic effects are neutralized by sRNA antitoxin RalA, which is encoded in trans on the opposite DNA strand. Has RAL-like activity. The polypeptide is Endodeoxyribonuclease toxin RalR (ralR) (Escherichia coli (strain K12)).